The following is a 360-amino-acid chain: Ribosomal RNA large subunit methyltransferase M (360 aa).

S-adenosyl-L-methionine-binding positions include Ser-192, 225 to 228, Asp-244, Asp-264, and Asp-280; that span reads APGG. Catalysis depends on Lys-309, which acts as the Proton acceptor.

This sequence belongs to the class I-like SAM-binding methyltransferase superfamily. RNA methyltransferase RlmE family. RlmM subfamily. As to quaternary structure, monomer.

It localises to the cytoplasm. It carries out the reaction cytidine(2498) in 23S rRNA + S-adenosyl-L-methionine = 2'-O-methylcytidine(2498) in 23S rRNA + S-adenosyl-L-homocysteine + H(+). Its function is as follows. Catalyzes the 2'-O-methylation at nucleotide C2498 in 23S rRNA. The chain is Ribosomal RNA large subunit methyltransferase M from Alkalilimnicola ehrlichii (strain ATCC BAA-1101 / DSM 17681 / MLHE-1).